A 118-amino-acid chain; its full sequence is Telomere bouquet protein 2 (118 aa).

In terms of assembly, interacts with bqt1. The bqt1-bqt2-sad1 complex binds rap1.

It localises to the cytoplasm. Its subcellular location is the nucleus. The protein localises to the cytoskeleton. The protein resides in the microtubule organizing center. It is found in the spindle pole body. It localises to the chromosome. Its subcellular location is the telomere. In terms of biological role, involved in chromosome segregation. During meiotic prophase, connects telomeres to the spindle pole body by forming a bridge between the telomere protein rap1 and the spindle pole body protein sad1. In Schizosaccharomyces pombe (strain 972 / ATCC 24843) (Fission yeast), this protein is Telomere bouquet protein 2 (bqt2).